The sequence spans 155 residues: Myelin basic protein (155 aa).

Disordered stretches follow at residues 1-70 and 109-155; these read MASA…GRQT and TDGQ…PARR. Alanine 2 is modified (N-acetylalanine). 2 stretches are compositionally biased toward basic and acidic residues: residues 37–49 and 123–134; these read GSRK…KEPA and KSKEAYRGRRDG.

It belongs to the myelin basic protein family.

The protein localises to the myelin membrane. This protein may function to maintain proper structure of myelin. In Heterodontus francisci (Horn shark), this protein is Myelin basic protein (MBP).